A 176-amino-acid polypeptide reads, in one-letter code: Putative phosphohydrolase YueE (176 aa).

An HD domain is found at 23–139 (GVAHAIACAY…VKKADELDEE (117 aa)).

This Bacillus subtilis (strain 168) protein is Putative phosphohydrolase YueE (yueE).